The sequence spans 363 residues: MSSGPRVSVAQPRLLFAASGTGGHVFPALAVAEALPEAKIDWLGVPDRLETQLVGDRYPLHTIRVGGFQGSWLLRPLTALRLIGAIFKVRRLLKRQQIEAVFTTGGYIAGPAIAAAWSLGIPVVLHESNALPGKTTRLLSRFCRRVALGFAEAGEYLPGRPLQVVGTPLRSQFYQPSQHGLPIPENVPVLLVMGGSQGAVAINRLVRAAAPAWLAAGLWIVHLTGQQDPDRGQLQHPQYIELSFVDNVAPLLNRADFSISRAGAGSLAELAAAGLPSLLIPYPFAAEDHQTFNARIFAKAGAAILAPQSELTVEQLQQQILDLLRARLGAAIANPLPKMAAAAGKLHVADSAEQVANLLRSLL.

UDP-N-acetyl-alpha-D-glucosamine contacts are provided by residues 21 to 23 (TGG), asparagine 129, arginine 170, serine 196, and glutamine 290.

It belongs to the glycosyltransferase 28 family. MurG subfamily.

The protein localises to the cell inner membrane. The catalysed reaction is di-trans,octa-cis-undecaprenyl diphospho-N-acetyl-alpha-D-muramoyl-L-alanyl-D-glutamyl-meso-2,6-diaminopimeloyl-D-alanyl-D-alanine + UDP-N-acetyl-alpha-D-glucosamine = di-trans,octa-cis-undecaprenyl diphospho-[N-acetyl-alpha-D-glucosaminyl-(1-&gt;4)]-N-acetyl-alpha-D-muramoyl-L-alanyl-D-glutamyl-meso-2,6-diaminopimeloyl-D-alanyl-D-alanine + UDP + H(+). It participates in cell wall biogenesis; peptidoglycan biosynthesis. Its function is as follows. Cell wall formation. Catalyzes the transfer of a GlcNAc subunit on undecaprenyl-pyrophosphoryl-MurNAc-pentapeptide (lipid intermediate I) to form undecaprenyl-pyrophosphoryl-MurNAc-(pentapeptide)GlcNAc (lipid intermediate II). This is UDP-N-acetylglucosamine--N-acetylmuramyl-(pentapeptide) pyrophosphoryl-undecaprenol N-acetylglucosamine transferase from Synechococcus sp. (strain ATCC 27144 / PCC 6301 / SAUG 1402/1) (Anacystis nidulans).